Here is an 847-residue protein sequence, read N- to C-terminus: B-cell receptor CD22 (847 aa).

The first 19 residues, 1–19 (MHLLGPWLLLLVLEYLAFS), serve as a signal peptide directing secretion. Residues 20–138 (DSSKWVFEHP…MERIHLNVSE (119 aa)) form the Ig-like V-type domain. Over 20-687 (DSSKWVFEHP…YYSPETIGRR (668 aa)) the chain is Extracellular. 3 disulfide bridges follow: Cys39/Cys167, Cys44/Cys102, and Cys161/Cys219. Residues Asn67, Asn101, and Asn112 are each glycosylated (N-linked (GlcNAc...) asparagine). Residue Arg120 coordinates N-acetylneuraminate. N-linked (GlcNAc...) asparagine glycans are attached at residues Asn135, Asn164, and Asn231. Ig-like C2-type domains lie at 143 to 235 (PHIQ…DTVQ), 242 to 326 (PKLE…VFLQ), 331 to 416 (PEPS…LDVQ), 419 to 500 (PKKV…VALN), 505 to 582 (PRDV…QTAS), and 593 to 676 (PRRL…STLT). Intrachain disulfides connect Cys265/Cys309, Cys353/Cys396, Cys442/Cys484, and Cys529/Cys571. 3 N-linked (GlcNAc...) asparagine glycosylation sites follow: Asn363, Asn445, and Asn479. Asn574 and Asn634 each carry an N-linked (GlcNAc...) asparagine glycan. A disulfide bond links Cys616 and Cys659. The helical transmembrane segment at 688–706 (VAVGLGSCLAILILAICGL) threads the bilayer. Residues 707–847 (KLQRRWKRTQ…ENVDYVILKH (141 aa)) lie on the Cytoplasmic side of the membrane. 3 positions are modified to phosphoserine: Ser725, Ser726, and Ser729. Short sequence motifs (ITIM motif) lie at residues 760–765 (ISYTTL) and 794–799 (VTYSAL). Tyr762 bears the Phosphotyrosine mark. Phosphotyrosine is present on residues Tyr807, Tyr822, and Tyr842. 2 short sequence motifs (ITIM motif) span residues 820–825 (IHYSEL) and 840–845 (VDYVIL).

The protein belongs to the immunoglobulin superfamily. SIGLEC (sialic acid binding Ig-like lectin) family. As to quaternary structure, predominantly monomer of isoform CD22-beta. Also found as heterodimer of isoform CD22-beta and a shorter isoform. Interacts with PTPN6/SHP-1, LYN, SYK, PIK3R1/PIK3R2 and PLCG1 upon phosphorylation. Interacts with GRB2, INPP5D and SHC1 upon phosphorylation. May form a complex with INPP5D/SHIP, GRB2 and SHC1. In terms of processing, phosphorylation of Tyr-762, Tyr-807 and Tyr-822 are involved in binding to SYK, GRB2 and SYK, respectively. Phosphorylation of Tyr-842 is involved in binding to SYK, PLCG2 and PIK3R1/PIK3R2. Post-translationally, phosphorylated on tyrosine residues by LYN. In terms of tissue distribution, B-lymphocytes.

It localises to the cell membrane. Most highly expressed siglec (sialic acid-binding immunoglobulin-like lectin) on B-cells that plays a role in various aspects of B-cell biology including differentiation, antigen presentation, and trafficking to bone marrow. Binds to alpha 2,6-linked sialic acid residues of surface molecules such as CD22 itself, CD45 and IgM in a cis configuration. Can also bind to ligands on other cells as an adhesion molecule in a trans configuration. Acts as an inhibitory coreceptor on the surface of B-cells and inhibits B-cell receptor induced signaling, characterized by inhibition of the calcium mobilization and cellular activation. Mechanistically, the immunoreceptor tyrosine-based inhibitory motif domain is phosphorylated by the Src kinase LYN, which in turn leads to the recruitment of the protein tyrosine phosphatase 1/PTPN6, leading to the negative regulation of BCR signaling. If this negative signaling from is of sufficient strength, apoptosis of the B-cell can be induced. This Homo sapiens (Human) protein is B-cell receptor CD22.